Here is a 308-residue protein sequence, read N- to C-terminus: Methionyl-tRNA formyltransferase (308 aa).

Position 109–112 (109–112) interacts with (6S)-5,6,7,8-tetrahydrofolate; that stretch reads SLLP.

The protein belongs to the Fmt family.

It carries out the reaction L-methionyl-tRNA(fMet) + (6R)-10-formyltetrahydrofolate = N-formyl-L-methionyl-tRNA(fMet) + (6S)-5,6,7,8-tetrahydrofolate + H(+). Its function is as follows. Attaches a formyl group to the free amino group of methionyl-tRNA(fMet). The formyl group appears to play a dual role in the initiator identity of N-formylmethionyl-tRNA by promoting its recognition by IF2 and preventing the misappropriation of this tRNA by the elongation apparatus. The chain is Methionyl-tRNA formyltransferase from Methylobacillus flagellatus (strain ATCC 51484 / DSM 6875 / VKM B-1610 / KT).